Here is a 420-residue protein sequence, read N- to C-terminus: Probable glycosyltransferase YdaM (420 aa).

The next 4 helical transmembrane spans lie at 4-24 (TLFFISLSLIWVMLLYHMFLM), 299-319 (IIFDLFYFFFTYFLFFFGVIM), 332-352 (LHLSVGFLAMILWILAFFLFM), and 371-391 (FFIVFLMYFTYSQAWIVLVIY).

Belongs to the glycosyltransferase 2 family.

The protein resides in the cell membrane. The sequence is that of Probable glycosyltransferase YdaM (ydaM) from Bacillus subtilis (strain 168).